A 388-amino-acid polypeptide reads, in one-letter code: Dual-specificity RNA methyltransferase RlmN (388 aa).

Glu109 functions as the Proton acceptor in the catalytic mechanism. In terms of domain architecture, Radical SAM core spans 115 to 354 (EDDRATLCVS…TIVRKTRGDD (240 aa)). A disulfide bridge links Cys122 with Cys359. [4Fe-4S] cluster is bound by residues Cys129, Cys133, and Cys136. S-adenosyl-L-methionine contacts are provided by residues 183-184 (GE), Ser215, 237-239 (SLH), and Asn316. Catalysis depends on Cys359, which acts as the S-methylcysteine intermediate.

This sequence belongs to the radical SAM superfamily. RlmN family. Requires [4Fe-4S] cluster as cofactor.

The protein resides in the cytoplasm. The enzyme catalyses adenosine(2503) in 23S rRNA + 2 reduced [2Fe-2S]-[ferredoxin] + 2 S-adenosyl-L-methionine = 2-methyladenosine(2503) in 23S rRNA + 5'-deoxyadenosine + L-methionine + 2 oxidized [2Fe-2S]-[ferredoxin] + S-adenosyl-L-homocysteine. The catalysed reaction is adenosine(37) in tRNA + 2 reduced [2Fe-2S]-[ferredoxin] + 2 S-adenosyl-L-methionine = 2-methyladenosine(37) in tRNA + 5'-deoxyadenosine + L-methionine + 2 oxidized [2Fe-2S]-[ferredoxin] + S-adenosyl-L-homocysteine. Specifically methylates position 2 of adenine 2503 in 23S rRNA and position 2 of adenine 37 in tRNAs. m2A2503 modification seems to play a crucial role in the proofreading step occurring at the peptidyl transferase center and thus would serve to optimize ribosomal fidelity. The protein is Dual-specificity RNA methyltransferase RlmN of Salmonella typhimurium (strain LT2 / SGSC1412 / ATCC 700720).